The chain runs to 595 residues: DNA primase (595 aa).

The segment at 38-62 adopts a CHC2-type zinc-finger fold; it reads CPFHQEKTPSFTVSDSKRFFYCFGC. In terms of domain architecture, Toprim spans 250–332; the sequence is NHSILVEGYF…EKKISFIRLP (83 aa). Positions 256, 300, and 302 each coordinate Mg(2+).

Belongs to the DnaG primase family. In terms of assembly, monomer. Interacts with DnaB. Zn(2+) is required as a cofactor. Mg(2+) serves as cofactor.

The enzyme catalyses ssDNA + n NTP = ssDNA/pppN(pN)n-1 hybrid + (n-1) diphosphate.. Functionally, RNA polymerase that catalyzes the synthesis of short RNA molecules used as primers for DNA polymerase during DNA replication. This Rickettsia felis (strain ATCC VR-1525 / URRWXCal2) (Rickettsia azadi) protein is DNA primase.